The primary structure comprises 354 residues: uncharacterized protein (354 aa).

It to yeast YHR056c.

This is an uncharacterized protein from Saccharomyces cerevisiae (strain ATCC 204508 / S288c) (Baker's yeast).